The chain runs to 883 residues: Alanine--tRNA ligase (883 aa).

Zn(2+) is bound by residues histidine 562, histidine 566, cysteine 664, and histidine 668.

Belongs to the class-II aminoacyl-tRNA synthetase family. Homotetramer. It depends on Zn(2+) as a cofactor.

It is found in the cytoplasm. It catalyses the reaction tRNA(Ala) + L-alanine + ATP = L-alanyl-tRNA(Ala) + AMP + diphosphate. Functionally, catalyzes the attachment of alanine to tRNA(Ala) in a two-step reaction: alanine is first activated by ATP to form Ala-AMP and then transferred to the acceptor end of tRNA(Ala). Also edits incorrectly charged Ser-tRNA(Ala) and Gly-tRNA(Ala) via its editing domain. The chain is Alanine--tRNA ligase from Buchnera aphidicola subsp. Schizaphis graminum (strain Sg).